A 643-amino-acid chain; its full sequence is Asparagine synthetase domain-containing protein 1 (643 aa).

Cysteine 2 functions as the For GATase activity in the catalytic mechanism. One can recognise a Glutamine amidotransferase type-2 domain in the interval 2–184; sequence CGICCSVNFS…ASGLFRIDLK (183 aa). The region spanning 285 to 601 is the Asparagine synthetase domain; it reads QFIDVLSVAV…GLTASALLPK (317 aa).

The sequence is that of Asparagine synthetase domain-containing protein 1 (ASNSD1) from Homo sapiens (Human).